A 1914-amino-acid polypeptide reads, in one-letter code: Diacylglycerol kinase eta (1914 aa).

Basic and acidic residues predominate over residues 1–10 (MSHLKLDTLH). The interval 1–37 (MSHLKLDTLHVQRSPRGSRRSSRSSGRSSACSSGSIS) is disordered. The span at 23–37 (RSSGRSSACSSGSIS) shows a compositional bias: low complexity. The PH domain occupies 82-175 (AIIKEGFLLK…WLGSLKTATA (94 aa)). 2 consecutive Phorbol-ester/DAG-type zinc fingers follow at residues 195–245 (HHHW…IANC) and 268–319 (PHQW…AVAC). A DAGKc domain is found at 350–486 (GNFSPLLVFV…DRWSIMVFEK (137 aa)). 5 disordered regions span residues 621-642 (EKDQ…SEKE), 783-805 (GANI…NTPT), 1016-1053 (TLCS…PPRI), 1116-1135 (QHRG…TPTN), and 1175-1216 (PNTI…TVSL). Over residues 1175–1187 (PNTILTTSTSPTK) the composition is skewed to polar residues. An SAM domain is found at 1851–1914 (WSVNEVVTWL…LQAIKDLSEN (64 aa)).

This sequence belongs to the eukaryotic diacylglycerol kinase family.

The protein resides in the cytoplasm. The enzyme catalyses a 1,2-diacyl-sn-glycerol + ATP = a 1,2-diacyl-sn-glycero-3-phosphate + ADP + H(+). In terms of biological role, phosphorylates diacylglycerol (DAG) to generate phosphatidic acid (PA). This chain is Diacylglycerol kinase eta, found in Drosophila sechellia (Fruit fly).